Here is a 193-residue protein sequence, read N- to C-terminus: Ion-translocating oxidoreductase complex subunit A (193 aa).

A run of 6 helical transmembrane segments spans residues 5–25, 39–59, 67–87, 102–122, 134–154, and 171–191; these read LLLLIGTVLVNNFVLVKFLGL, IGMGLATTFVLTLASVCAYLV, LGIEYLRTMSFILVIAVVVQF, LLGIFLPLITTNCAVLGVALL, IIYGFGAAVGFSLVLILFASM, and SIAMITAGLMSLAFMGFTGLV.

Belongs to the NqrDE/RnfAE family. The complex is composed of six subunits: RnfA, RnfB, RnfC, RnfD, RnfE and RnfG.

The protein resides in the cell inner membrane. Part of a membrane-bound complex that couples electron transfer with translocation of ions across the membrane. In Vibrio cholerae serotype O1 (strain ATCC 39315 / El Tor Inaba N16961), this protein is Ion-translocating oxidoreductase complex subunit A.